We begin with the raw amino-acid sequence, 130 residues long: Small ribosomal subunit protein uS8 (130 aa).

The residue at position 88 (Lys-88) is an N6-succinyllysine.

Belongs to the universal ribosomal protein uS8 family. Component of the 40S ribosomal subunit. Part of the small subunit (SSU) processome, composed of more than 70 proteins and the RNA chaperone small nucleolar RNA (snoRNA) U3.

The protein resides in the cytoplasm. It localises to the nucleus. Its subcellular location is the nucleolus. Component of the small ribosomal subunit. Part of the small subunit (SSU) processome, first precursor of the small eukaryotic ribosomal subunit. During the assembly of the SSU processome in the nucleolus, many ribosome biogenesis factors, an RNA chaperone and ribosomal proteins associate with the nascent pre-rRNA and work in concert to generate RNA folding, modifications, rearrangements and cleavage as well as targeted degradation of pre-ribosomal RNA by the RNA exosome. Required for proper erythropoiesis. This is Small ribosomal subunit protein uS8 (RPS15A) from Pongo abelii (Sumatran orangutan).